Here is a 187-residue protein sequence, read N- to C-terminus: MSVEPSLNRAPIMERFGDTIEDLGTAHGIDVFAVPPERIVEFCRFLKEHPAMQFNFLSDICGVDHYPETPRFEAVYHLYSLPNRWRVRIKCRLGDPPEVPSVTGVWRTANWHEREAWDMYGIRFAGHPDLRRIYMWEGFEGFPQRKDFPLRGYKDKLNPFGAEGPPPTQPDLATRDIPQGRPSTPES.

The segment at 153–187 is disordered; the sequence is YKDKLNPFGAEGPPPTQPDLATRDIPQGRPSTPES.

This sequence belongs to the complex I 30 kDa subunit family. In terms of assembly, NDH-1 is composed of 14 different subunits. Subunits NuoB, C, D, E, F, and G constitute the peripheral sector of the complex.

The protein resides in the cell inner membrane. The catalysed reaction is a quinone + NADH + 5 H(+)(in) = a quinol + NAD(+) + 4 H(+)(out). In terms of biological role, NDH-1 shuttles electrons from NADH, via FMN and iron-sulfur (Fe-S) centers, to quinones in the respiratory chain. The immediate electron acceptor for the enzyme in this species is believed to be ubiquinone. Couples the redox reaction to proton translocation (for every two electrons transferred, four hydrogen ions are translocated across the cytoplasmic membrane), and thus conserves the redox energy in a proton gradient. This is NADH-quinone oxidoreductase subunit C 2 from Rhizobium etli (strain CIAT 652).